The sequence spans 500 residues: Protein DETOXIFICATION 29 (500 aa).

Helical transmembrane passes span 67–87 (GAIT…AVSV), 91–111 (VVAG…ETLC), 132–152 (VILN…APIL), 161–181 (ISSA…AYAI), 197–217 (VMAV…WFVI), 227–247 (LAVV…VYIF), 277–297 (AVML…AGYL), 302–322 (ISVA…MIAI), 349–369 (LVAV…LLIF), 393–413 (ILAL…VAVG), 419–439 (VVAY…GLLL), and 449–469 (GIWC…TWMI).

This sequence belongs to the multi antimicrobial extrusion (MATE) (TC 2.A.66.1) family.

Its subcellular location is the vacuole membrane. This Arabidopsis thaliana (Mouse-ear cress) protein is Protein DETOXIFICATION 29.